Here is a 738-residue protein sequence, read N- to C-terminus: Wall-associated receptor kinase 4 (738 aa).

The N-terminal stretch at 1–22 (MKVQRLFLVAIFCLSYMQLVKG) is a signal peptide. Residues 23–335 (QTLPRCPEKC…PKGNPEYVEW (313 aa)) lie on the Extracellular side of the membrane. N-linked (GlcNAc...) asparagine glycosylation is found at Asn-34, Asn-56, Asn-109, Asn-115, Asn-132, Asn-182, and Asn-208. Residues 232–278 (RGETCGQVGEKKCGVNGICSNSASGIGYTCKCKGGFQGNPYLQNGCQ) enclose the EGF-like 1 domain. 6 cysteine pairs are disulfide-bonded: Cys-236–Cys-250, Cys-244–Cys-261, Cys-263–Cys-277, Cys-283–Cys-300, Cys-294–Cys-309, and Cys-311–Cys-324. The EGF-like 2; calcium-binding domain occupies 279–325 (DINECTTANPIHKHNCSGDSTCENKLGHFRCNCRSRYELNTTTNTCK). N-linked (GlcNAc...) asparagine glycosylation is present at Asn-293. Asn-318 carries N-linked (GlcNAc...) asparagine glycosylation. A helical membrane pass occupies residues 336–356 (TTIVLGTTIGFLVILLAISCI). Over 357–738 (EHKMKNTKDT…VAILDIEAGR (382 aa)) the chain is Cytoplasmic. A Phosphothreonine modification is found at Thr-399. Positions 410-693 (YDENRILGQG…RVTKTKHKWS (284 aa)) constitute a Protein kinase domain. ATP is bound by residues 416–424 (LGQGGQGTV) and Lys-438. Tyr-483 bears the Phosphotyrosine mark. The active-site Proton acceptor is Asp-535. Thr-569 and Thr-574 each carry phosphothreonine. Tyr-582 is modified (phosphotyrosine).

The protein belongs to the protein kinase superfamily. Ser/Thr protein kinase family. As to expression, strictly expressed in siliques.

The protein resides in the membrane. The enzyme catalyses L-seryl-[protein] + ATP = O-phospho-L-seryl-[protein] + ADP + H(+). It catalyses the reaction L-threonyl-[protein] + ATP = O-phospho-L-threonyl-[protein] + ADP + H(+). Functionally, serine/threonine-protein kinase that may function as a signaling receptor of extracellular matrix component. Binding to pectin may have significance in the control of cell expansion, morphogenesis and development. The sequence is that of Wall-associated receptor kinase 4 (WAK4) from Arabidopsis thaliana (Mouse-ear cress).